The following is a 347-amino-acid chain: Cyclic AMP-dependent transcription factor ATF-4 (347 aa).

The disordered stretch occupies residues 202 to 296 (TPQCVKEEDT…AATRYRQKKR (95 aa)). T211 carries the phosphothreonine modification. Residues S213, S217, S222, S229, and S233 each carry the phosphoserine modification. The BetaTrCP degron motif signature appears at 213 to 222 (SDSDSGICMS). Polar residues predominate over residues 228–238 (GSPQHSPSTSR). At P234 the chain carries 4-hydroxyproline. Phosphoserine is present on residues S243 and S246. Residues K256 and K268 each participate in a glycyl lysine isopeptide (Lys-Gly) (interchain with G-Cter in SUMO2) cross-link. Residues 269 to 283 (VKTEKLDKKLKKMEQ) are compositionally biased toward basic and acidic residues. Residues 274-337 (LDKKLKKMEQ…QYLKDLIEEV (64 aa)) form the bZIP domain. Positions 276 to 296 (KKLKKMEQNKTAATRYRQKKR) are basic motif. The interval 301-337 (ALTGECKELEKKNEALKEKADSLAKEIQYLKDLIEEV) is interaction with GABBR1. The segment at 302–330 (LTGECKELEKKNEALKEKADSLAKEIQYL) is leucine-zipper. Position 307 is an N6-acetyllysine (K307).

Belongs to the bZIP family. In terms of assembly, binds DNA as a homodimer and as a heterodimer. Heterodimer; heterodimerizes with CEBPB. Heterodimer; heterodimerizes with DDIT3/CHOP. Interacts with CEP290 (via an N-terminal region). Interacts with NEK6, DAPK2 (isoform 2) and ZIPK/DAPK3. Interacts (via its leucine zipper domain) with GABBR1 and GABBR2 (via their C-termini). Forms a heterodimer with TXLNG in osteoblasts. Interacts (via its DNA binding domain) with FOXO1 (C-terminal half); the interaction occurs in osteoblasts and regulates glucose homeostasis through suppression of beta-cell proliferation and a decrease in insulin production. Interacts with SATB2; the interaction results in enhanced DNA binding and transactivation by these transcription factors. Interacts with ABRAXAS2. Interacts with TRIB3, inhibiting the transactivation activity of ATF4. Interacts with DISC1; which inhibits ATF4 transcription factor activity by disrupting ATF4 dimerization and DNA-binding. Interacts with EP300/p300; EP300/p300 stabilizes ATF4 and increases its transcriptional activity independently of its catalytic activity by preventing its ubiquitination. In terms of processing, ubiquitinated by SCF(BTRC) in response to mTORC1 signal, followed by proteasomal degradation and leading to down-regulate expression of SIRT4. Interaction with EP300/p300 inhibits ubiquitination by SCF(BTRC). Phosphorylation at Ser-243 by RPS6KA3/RSK2 in osteoblasts enhances transactivation activity and promotes osteoblast differentiation. Phosphorylated on the betaTrCP degron motif at Ser-217, followed by phosphorylation at Thr-211, Ser-222, Ser-229, Ser-233 and Ser-246, promoting interaction with BTRC and ubiquitination. Phosphorylation is promoted by mTORC1. Phosphorylation at Ser-213 by CK2 decreases its stability. Phosphorylated by NEK6. Post-translationally, hydroxylated by PHD3, leading to decreased protein stability. Expressed in brain, heart, liver, spleen, lung and muscle, but not testis.

The protein localises to the nucleus. Its subcellular location is the nucleus speckle. It localises to the cytoplasm. The protein resides in the cell membrane. It is found in the cytoskeleton. The protein localises to the microtubule organizing center. Its subcellular location is the centrosome. In terms of biological role, transcription factor that binds the cAMP response element (CRE) (consensus: 5'-GTGACGT[AC][AG]-3') and displays two biological functions, as regulator of metabolic and redox processes under normal cellular conditions, and as master transcription factor during integrated stress response (ISR). Binds to asymmetric CRE's as a heterodimer and to palindromic CRE's as a homodimer. Core effector of the ISR, which is required for adaptation to various stress such as endoplasmic reticulum (ER) stress, amino acid starvation, mitochondrial stress or oxidative stress. During ISR, ATF4 translation is induced via an alternative ribosome translation re-initiation mechanism in response to EIF2S1/eIF-2-alpha phosphorylation, and stress-induced ATF4 acts as a master transcription factor of stress-responsive genes in order to promote cell recovery. Promotes the transcription of genes linked to amino acid sufficiency and resistance to oxidative stress to protect cells against metabolic consequences of ER oxidation. Activates the transcription of NLRP1, possibly in concert with other factors in response to ER stress. Activates the transcription of asparagine synthetase (ASNS) in response to amino acid deprivation or ER stress. However, when associated with DDIT3/CHOP, the transcriptional activation of the ASNS gene is inhibited in response to amino acid deprivation. Together with DDIT3/CHOP, mediates programmed cell death by promoting the expression of genes involved in cellular amino acid metabolic processes, mRNA translation and the terminal unfolded protein response (terminal UPR), a cellular response that elicits programmed cell death when ER stress is prolonged and unresolved. Activates the expression of COX7A2L/SCAF1 downstream of the EIF2AK3/PERK-mediated unfolded protein response, thereby promoting formation of respiratory chain supercomplexes and increasing mitochondrial oxidative phosphorylation. Together with DDIT3/CHOP, activates the transcription of the IRS-regulator TRIB3 and promotes ER stress-induced neuronal cell death by regulating the expression of BBC3/PUMA in response to ER stress. May cooperate with the UPR transcriptional regulator QRICH1 to regulate ER protein homeostasis which is critical for cell viability in response to ER stress. In the absence of stress, ATF4 translation is at low levels and it is required for normal metabolic processes such as embryonic lens formation, fetal liver hematopoiesis, bone development and synaptic plasticity. Acts as a regulator of osteoblast differentiation in response to phosphorylation by RPS6KA3/RSK2: phosphorylation in osteoblasts enhances transactivation activity and promotes expression of osteoblast-specific genes and post-transcriptionally regulates the synthesis of Type I collagen, the main constituent of the bone matrix. Cooperates with FOXO1 in osteoblasts to regulate glucose homeostasis through suppression of beta-cell production and decrease in insulin production. Activates transcription of SIRT4. Regulates the circadian expression of the core clock component PER2 and the serotonin transporter SLC6A4. Binds in a circadian time-dependent manner to the cAMP response elements (CRE) in the SLC6A4 and PER2 promoters and periodically activates the transcription of these genes. Mainly acts as a transcriptional activator in cellular stress adaptation, but it can also act as a transcriptional repressor: acts as a regulator of synaptic plasticity by repressing transcription, thereby inhibiting induction and maintenance of long-term memory. Regulates synaptic functions via interaction with DISC1 in neurons, which inhibits ATF4 transcription factor activity by disrupting ATF4 dimerization and DNA-binding. This Rattus norvegicus (Rat) protein is Cyclic AMP-dependent transcription factor ATF-4.